Reading from the N-terminus, the 442-residue chain is MIQPRTLKGFRDYLPAAMIPREQLMQTAREVFRSFGFAPIDTPTLEHLEILTGKGSDETDRQLYSFEDNGGRPVGMRFDLTVPLARFAAQHIGTLGTPFKRYHIAPVWRGEKPQEGRYREFVQCDFDTIGTTSELADIEAVCVIDALLRAIGIDAFTISINNRAILTGLLESLGLADKTTPVLRSLDKLGKIGREKTANEMVESAGVTAEQADAVLRLAECDGDAESILASLPEITGGNETAAAGIERLTQIYRGALASGVSPDRLKIDVSIARGLDYYTGVIFETTLDELPGIGSVCSGGRYDNLAGLYTKQHLPGIGASLGLDRLLAALESLGRLSGVSKPCAVFVPFFDKGHRDDYLKLASQLRDAGIGVEVYPEPKKLGQQLKYADSQGFAVAIIAGGNEWEAGAVQVKTLATKESQDVAYSHESPDALIEAIQAATS.

The protein belongs to the class-II aminoacyl-tRNA synthetase family. In terms of assembly, homodimer.

The protein localises to the cytoplasm. The catalysed reaction is tRNA(His) + L-histidine + ATP = L-histidyl-tRNA(His) + AMP + diphosphate + H(+). In Rhodopirellula baltica (strain DSM 10527 / NCIMB 13988 / SH1), this protein is Histidine--tRNA ligase.